We begin with the raw amino-acid sequence, 191 residues long: Transmembrane protein 17B (191 aa).

4 consecutive transmembrane segments (helical) span residues 50 to 70 (MSLY…VVML), 83 to 103 (FILI…LYLG), 115 to 135 (LAGF…FQLF), and 147 to 167 (GVHI…FVAL).

It belongs to the TMEM17 family. In terms of assembly, part of the tectonic-like complex (also named B9 complex).

It localises to the cell projection. Its subcellular location is the cilium membrane. Transmembrane component of the tectonic-like complex, a complex localized at the transition zone of primary cilia and acting as a barrier that prevents diffusion of transmembrane proteins between the cilia and plasma membranes. Required for ciliogenesis and sonic hedgehog/SHH signaling. The sequence is that of Transmembrane protein 17B (Tmem17b) from Danio rerio (Zebrafish).